A 201-amino-acid chain; its full sequence is Protein tirC (201 aa).

A TIR domain is found at 52–186; sequence ERIKVFIVHG…YVWINYTEDL (135 aa).

This Dictyostelium discoideum (Social amoeba) protein is Protein tirC (tirC).